The following is a 114-amino-acid chain: Putative antiporter subunit mnhC2 (114 aa).

3 helical membrane-spanning segments follow: residues 3–23, 28–48, and 72–92; these read LILL…ILSI, IVIG…SMGT, and AIVL…LVLV.

It belongs to the CPA3 antiporters (TC 2.A.63) subunit C family. May form a heterooligomeric complex that consists of seven subunits: mnhA2, mnhB2, mnhC2, mnhD2, mnhE2, mnhF2 and mnhG2.

It localises to the cell membrane. The chain is Putative antiporter subunit mnhC2 (mnhC2) from Staphylococcus aureus (strain MRSA252).